The following is a 353-amino-acid chain: 2-oxoglutarate-dependent dioxygenase phqC (353 aa).

The Fe2OG dioxygenase domain occupies 199 to 315 (CASELRLNNY…RRSCAFFLKA (117 aa)). Residues histidine 227, aspartate 229, and histidine 287 each coordinate Fe cation. Arginine 302 is a binding site for 2-oxoglutarate.

This sequence belongs to the iron/ascorbate-dependent oxidoreductase family. Requires Fe(2+) as cofactor.

The protein operates within alkaloid biosynthesis. In terms of biological role, 2-oxoglutarate-dependent dioxygenase; part of the gene cluster that mediates the biosynthesis of paraherquamide, a fungal indole alkaloid that belongs to a family of natural products containing a characteristic bicyclo[2.2.2]diazaoctane core. The first steps in the biosynthesis of paraherquamide is the production of the beta-methyl-proline precursor from L-isoleucine. They require oxidation of a terminally hydroxylated L-isoleucine to the corresponding aldehyde by enzymes which have still to be identified. Spontaneous cyclization and dehydration would yield the 4-methyl pyrolline-5-carboxylic acid, which is then reduced by the pyrroline-5-carboxylate reductase phqD leading to the beta-methyl-proline precursor. The next step of paraherquamide biosynthesis involves coupling of beta-methyl-proline and L-tryptophan by the bimodular NRPS phqB, to produce a monooxopiperazine intermediate. The reductase (R) domain of phqB utilizes NADPH for hydride transfer to reduce the thioester bond of the T domain-tethered linear dipeptide to a hemithioaminal intermediate, which spontaneously cleaves the C-S bond to release the aldehyde product. This compound undergoes spontaneous cyclization and dehydration to give a dienamine which is reverse prenylated at C-2 by the reverse prenyltransferase phqJ. The other prenyltransferase present in the cluster, phqI may be a redundant gene in the pathway. During biosynthetic assembly, the key step to produce the polycyclic core is catalyzed by the bifunctional reductase and intramolecular [4+2] Diels-Alderase, phqE, resulting in formation of the [2.2.2] diazaoctane intermediate preparaherquamide. Following formation of preparaherquamide, an indole 2,3-epoxidation-initiated pinacol-like rearrangement is catalyzed by the phqK FAD-dependent monooxygenase. The prenyltransferase phqA, the cytochrome P450 monooxygenase phqL, and the FAD-linked oxidoreductase phqH (or the cytochrome P450 monooxygenase phqM), are proposed to be involved in the formation of the pyran ring. The FAD-dependent monooxygenase phqK is likely responsible for generation of the spiro-oxindole, and the N-methylation is likely mediated by the phqN methyltransferase leading to the isolable natural product paraherquamide F. However, the order of these biosynthetic steps has still to be determined. In late-stage paraherquamide biosynthesis, the third P450 monooxygenase, phqO, is probably responsible for the C-14 hydroxylation, transforming paraherquamide F to paraherquamide G, and paraherquamide E to the final product paraherquamide A. The expansion from the 6-membered ring pyran (in paraherquamides F and G) to the 7-membered dioxepin ring (in paraherquamides A and E) represents a poorly understood but intriguing process that probably involves the 2-oxoglutarate-dependent dioxygenase phqC. Finally, the remaining members of the paraherquamide cluster, including phqI as well as phqM (or phqH), do not have a clearly prescribed role and appear to be redundant. This is 2-oxoglutarate-dependent dioxygenase phqC from Penicillium fellutanum.